The following is a 138-amino-acid chain: Acid shock protein (138 aa).

The N-terminal stretch at 1–21 (MKKVLALIVAATMGLSSVAFA) is a signal peptide. The propeptide occupies 22-85 (ADAVAPAAAA…TKKAPAQKAQ (64 aa)). A compositionally biased stretch (low complexity) spans 31-50 (APAATTTAAPAAAATKAPAK). The disordered stretch occupies residues 31 to 138 (APAATTTAAP…ATKKAAPAAK (108 aa)). Composition is skewed to basic residues over residues 51–77 (ATHH…KATK) and 122–131 (AAKKHHKATK).

This sequence belongs to the Asr family. Proteolytic processing gives rise to the active protein.

The protein resides in the periplasm. Its function is as follows. Required for growth and/or survival at acidic conditions. In Serratia proteamaculans (strain 568), this protein is Acid shock protein.